A 213-amino-acid polypeptide reads, in one-letter code: Small ribosomal subunit protein uS3 (213 aa).

Positions 38–106 (IRKYVKEKIF…EFALEVSEIR (69 aa)) constitute a KH type-2 domain.

Belongs to the universal ribosomal protein uS3 family. In terms of assembly, part of the 30S ribosomal subunit. Forms a tight complex with proteins S10 and S14.

Functionally, binds the lower part of the 30S subunit head. Binds mRNA in the 70S ribosome, positioning it for translation. The polypeptide is Small ribosomal subunit protein uS3 (Maridesulfovibrio salexigens (strain ATCC 14822 / DSM 2638 / NCIMB 8403 / VKM B-1763) (Desulfovibrio salexigens)).